A 53-amino-acid polypeptide reads, in one-letter code: uncharacterized protein (53 aa).

The first 19 residues, Met1–Ala19, serve as a signal peptide directing secretion.

This is an uncharacterized protein from Autographa californica nuclear polyhedrosis virus (AcMNPV).